The chain runs to 56 residues: Stable protein 1 (56 aa).

A Stress-response A/B barrel domain is found at 1–44 (GYTHAFESTFESKSGLQEYLDSAALAAFAEGFLPTLSQRSFNWG).

The polypeptide is Stable protein 1 (Populus euphratica (Euphrates poplar)).